A 352-amino-acid chain; its full sequence is B1 bradykinin receptor (352 aa).

The Extracellular segment spans residues 1 to 41 (MASWPPLQLQSSNQSQLFPQNATACDNAPEAWDLLHRVLPT). Residues Asn-13 and Asn-21 are each glycosylated (N-linked (GlcNAc...) asparagine). Residues 42–62 (FIISICSFGLLGNLFVLLVFL) traverse the membrane as a helical segment. Topologically, residues 63 to 72 (LPRRRLNVAE) are cytoplasmic. A helical transmembrane segment spans residues 73–93 (IYLANLAASDLVFVLGLPFWA). Residues 94 to 110 (ENIWNQFNWPFGALLCR) lie on the Extracellular side of the membrane. The cysteines at positions 109 and 188 are disulfide-linked. The helical transmembrane segment at 111–131 (VINGIIKANLFISIFLVVAIS) threads the bilayer. The Cytoplasmic segment spans residues 132-153 (QDRYCVLVHPMASRRRQRRRQA). A helical membrane pass occupies residues 154–174 (RVTCVLIWVVGGLLSIPTFLL). Over 175–206 (RSIQAVPDLNITACILLLPHEAWHFARIVELN) the chain is Extracellular. N-linked (GlcNAc...) asparagine glycosylation is present at Asn-184. The helical transmembrane segment at 207 to 227 (ILAFLLPLAAIIFFNYHILAS) threads the bilayer. At 228–250 (LRGREEVSRTRCGGSKDSKTTAL) the chain is on the cytoplasmic side. The helical transmembrane segment at 251 to 271 (ILTLVVAFLVCWAPYHFFAFL) threads the bilayer. Over 272 to 294 (EFLFQVQAVRGCFWEDFIDLGLQ) the chain is Extracellular. Residues 295-315 (LANFLAFTNSSLNPVIYVFAG) traverse the membrane as a helical segment. The Cytoplasmic portion of the chain corresponds to 316 to 352 (RLFRTKVWELYKQCTPKSLAPISSSHRKEIFQLFWRN). The S-palmitoyl cysteine moiety is linked to residue Cys-329.

It belongs to the G-protein coupled receptor 1 family. Bradykinin receptor subfamily. BDKRB1 sub-subfamily.

It is found in the cell membrane. Functionally, this is a receptor for bradykinin. Could be a factor in chronic pain and inflammation. The protein is B1 bradykinin receptor (BDKRB1) of Macaca fascicularis (Crab-eating macaque).